Consider the following 123-residue polypeptide: Defensin beta 118 (123 aa).

Positions 1–19 (MKLLLLALPMLVLLPQVIP) are cleaved as a signal peptide. 3 disulfides stabilise this stretch: Cys27–Cys54, Cys34–Cys48, and Cys38–Cys55. Positions 65–123 (VPTTSPTPLSDSTPGIIDDILTVRFTTDYFEVSSKKDMIEESEAGRGTETSLPNVHHSS) are excised as a propeptide. Basic and acidic residues predominate over residues 100-110 (KDMIEESEAGR). Positions 100–123 (KDMIEESEAGRGTETSLPNVHHSS) are disordered. The span at 112–123 (TETSLPNVHHSS) shows a compositional bias: polar residues.

Belongs to the beta-defensin family. The three-dimensional structure formed by the three intramolecular disulfide bridges is indispensable for antimicrobial activity.

The protein localises to the secreted. Its function is as follows. Host defense peptide that exhibits antimicrobial activity against both Gram-negative bacteria, such as E.coli and S.typhimurium, and Gram-positive bacteria, such as S.aureus and B.subtilis. Inhibits cell adhesion of E.coli on intestinal epithelial enterocytes. Causes rapid permeabilization of both the outer and inner membrane of E.coli, leading to morphological alterations on the bacterial surface. Binds to bacterial lipopolysaccharides (LPS) with high affinity, and may thereby be involved in immunoregulation through LPS neutralization. May contribute to epididymal innate immunity and protect the sperm against attack by microorganisms. This Gorilla gorilla gorilla (Western lowland gorilla) protein is Defensin beta 118 (DEFB118).